Consider the following 789-residue polypeptide: E3 UFM1-protein ligase 1 (789 aa).

A required for E3 UFM1-protein ligase activity region spans residues 2–212; that stretch reads AADWEEIRRL…VSNLITRYGF (211 aa). Disordered stretches follow at residues 407–470 and 743–763; these read LENS…TGRN and SKKA…ADTI. Positions 444–453 are enriched in basic residues; the sequence is KIKKTKKKGR. Positions 748 to 760 are enriched in acidic residues; that stretch reads QEDDNKTEEEEGA.

It belongs to the UFL1 family. In terms of assembly, catalytic component of the UFM1 ribosome E3 ligase (UREL) complex. Interacts with E2-like enzyme UFC1.

It localises to the endoplasmic reticulum membrane. Its subcellular location is the cytoplasm. It is found in the cytosol. The protein localises to the nucleus. The protein resides in the chromosome. Functionally, E3 protein ligase that mediates ufmylation, the covalent attachment of the ubiquitin-like modifier UFM1 to lysine residues on target proteins, and which plays a key role in various processes, such as ribosome recycling, response to DNA damage, interferon response or reticulophagy (also called ER-phagy). As part of the UREL complex, plays a key role in ribosome recycling by catalyzing mono-ufmylation of RPL26/uL24 subunit of the 60S ribosome. Ufmylation of RPL26/uL24 occurs on free 60S ribosomes following ribosome dissociation: it weakens the junction between post-termination 60S subunits and SEC61 translocons, promoting release and recycling of the large ribosomal subunit from the endoplasmic reticulum membrane. Ufmylation of RPL26/uL24 and subsequent 60S ribosome recycling either take place after normal termination of translation or after ribosome stalling during cotranslational translocation at the endoplasmic reticulum. Involved in reticulophagy in response to endoplasmic reticulum stress by mediating ufmylation of proteins such as CYB5R3 and RPN1, thereby promoting lysosomal degradation of ufmylated proteins. Ufmylation in response to endoplasmic reticulum stress is essential for processes such as hematopoiesis, blood vessel morphogenesis or inflammatory response. The sequence is that of E3 UFM1-protein ligase 1 from Gallus gallus (Chicken).